Consider the following 177-residue polypeptide: Nucleoside triphosphate/diphosphate phosphatase (177 aa).

Arginine 23 acts as the Proton donor in catalysis. Mg(2+) is bound by residues asparagine 87, aspartate 103, aspartate 105, aspartate 107, aspartate 120, and glutamate 123.

This sequence belongs to the Ntdp family. Requires Mg(2+) as cofactor.

It catalyses the reaction a ribonucleoside 5'-triphosphate + H2O = a ribonucleoside 5'-diphosphate + phosphate + H(+). The enzyme catalyses a ribonucleoside 5'-diphosphate + H2O = a ribonucleoside 5'-phosphate + phosphate + H(+). In terms of biological role, has nucleoside phosphatase activity towards nucleoside triphosphates and nucleoside diphosphates. The protein is Nucleoside triphosphate/diphosphate phosphatase of Streptococcus uberis (strain ATCC BAA-854 / 0140J).